Reading from the N-terminus, the 94-residue chain is Co-chaperonin GroES (94 aa).

In terms of assembly, heptamer of 7 subunits arranged in a ring. Interacts with the chaperonin GroEL.

It localises to the cytoplasm. Functionally, together with the chaperonin GroEL, plays an essential role in assisting protein folding. The GroEL-GroES system forms a nano-cage that allows encapsulation of the non-native substrate proteins and provides a physical environment optimized to promote and accelerate protein folding. GroES binds to the apical surface of the GroEL ring, thereby capping the opening of the GroEL channel. The protein is Co-chaperonin GroES of Thermoanaerobacter brockii (Thermoanaerobium brockii).